A 2314-amino-acid chain; its full sequence is A-kinase anchor protein 6 (2314 aa).

The segment covering 1-12 (MLTMSVTLSPLR) has biased composition (polar residues). Disordered regions lie at residues 1-25 (MLTM…DASP), 285-432 (PSSC…DPPD), 505-613 (SLCR…PCHA), and 736-755 (TDEK…HSAT). The span at 301 to 311 (SDDHKGEHGED) shows a compositional bias: basic and acidic residues. The span at 319 to 330 (QLDSTVGMSSLD) shows a compositional bias: polar residues. Over residues 398–420 (ETQKNERKGSDRKGQVVDLKPEL) the composition is skewed to basic and acidic residues. The segment covering 569 to 592 (SKASSSPPCSHSSESSLGSDSIKS) has biased composition (low complexity). The segment covering 736–753 (TDEKSERPSSSEKNESHS) has biased composition (basic and acidic residues). Spectrin repeat units lie at residues 768 to 847 (QHQE…QLLE) and 1033 to 1148 (ILEK…LLDD). Phosphoserine is present on S1072. Residues 1349 to 1401 (CHSGDLSQNSGSESGIVSEGDNEMPTNSDMSLFSMVDGSPSNPETEHPDPQMG) are disordered. Residues 1353–1363 (DLSQNSGSESG) are compositionally biased toward polar residues. Phosphoserine occurs at positions 1568 and 1593. Composition is skewed to basic and acidic residues over residues 1816–1831 (RSGV…DGGG) and 1874–1891 (GENK…HVAD). Disordered regions lie at residues 1816–1838 (RSGV…ANPS), 1854–1926 (LSEN…KTIS), and 1940–2012 (SEDS…SGAR). Positions 1917–1926 (NLASNVKTIS) are enriched in polar residues. Positions 1944–1958 (SVARKEFCPPNDRHP) are enriched in basic and acidic residues. The tract at residues 2062–2075 (IIDMASTALKSKSQ) is PKA-RII subunit binding domain. Residues 2166-2286 (EEAGLPGALP…NAKQPKGKVA (121 aa)) form a disordered region. Basic and acidic residues predominate over residues 2215–2226 (GADDAKEGDDVS). Residues 2227–2243 (HTSQGCAESTEPTTPSG) show a composition bias toward polar residues.

As to quaternary structure, interacts with RII subunit of PKA, phosphatase 2B (calcineurin) and AKAP79. Interacts with SYNPO2.

It is found in the sarcoplasmic reticulum. It localises to the nucleus membrane. Functionally, binds to type II regulatory subunits of protein kinase A and anchors/targets them to the nuclear membrane or sarcoplasmic reticulum. May act as an adapter for assembling multiprotein complexes. The sequence is that of A-kinase anchor protein 6 (Akap6) from Rattus norvegicus (Rat).